The following is a 215-amino-acid chain: Cytochrome c biogenesis ATP-binding export protein CcmA (215 aa).

In terms of domain architecture, ABC transporter spans 7 to 209 (LKIDRLACQR…ALTVLNLAQY (203 aa)). 39-46 (GHNGIGKT) lines the ATP pocket.

This sequence belongs to the ABC transporter superfamily. CcmA exporter (TC 3.A.1.107) family. In terms of assembly, the complex is composed of two ATP-binding proteins (CcmA) and two transmembrane proteins (CcmB).

The protein localises to the cell inner membrane. The catalysed reaction is heme b(in) + ATP + H2O = heme b(out) + ADP + phosphate + H(+). Its function is as follows. Part of the ABC transporter complex CcmAB involved in the biogenesis of c-type cytochromes; once thought to export heme, this seems not to be the case, but its exact role is uncertain. Responsible for energy coupling to the transport system. The sequence is that of Cytochrome c biogenesis ATP-binding export protein CcmA from Mannheimia succiniciproducens (strain KCTC 0769BP / MBEL55E).